The primary structure comprises 492 residues: 2-succinylbenzoate--CoA ligase (492 aa).

Belongs to the ATP-dependent AMP-binding enzyme family. MenE subfamily.

It catalyses the reaction 2-succinylbenzoate + ATP + CoA = 2-succinylbenzoyl-CoA + AMP + diphosphate. It functions in the pathway quinol/quinone metabolism; 1,4-dihydroxy-2-naphthoate biosynthesis; 1,4-dihydroxy-2-naphthoate from chorismate: step 5/7. Its pathway is quinol/quinone metabolism; menaquinone biosynthesis. Functionally, converts 2-succinylbenzoate (OSB) to 2-succinylbenzoyl-CoA (OSB-CoA). The sequence is that of 2-succinylbenzoate--CoA ligase from Geobacillus sp. (strain WCH70).